A 467-amino-acid polypeptide reads, in one-letter code: Membrane-bound lytic murein transglycosylase F (467 aa).

The signal sequence occupies residues 1-33; that stretch reads MTELFRHSKHLLASLALLSVLGLMLAMHPSPSA. Residues 34-266 form a non-LT domain region; the sequence is IERIMARGEL…KLEDRFYGHV (233 aa). An LT domain region spans residues 268-467; sequence QFNLYAARSF…RRDDTLIALN (200 aa). The active site involves Glu313.

This sequence in the N-terminal section; belongs to the bacterial solute-binding protein 3 family. In the C-terminal section; belongs to the transglycosylase Slt family.

Its subcellular location is the cell outer membrane. It catalyses the reaction Exolytic cleavage of the (1-&gt;4)-beta-glycosidic linkage between N-acetylmuramic acid (MurNAc) and N-acetylglucosamine (GlcNAc) residues in peptidoglycan, from either the reducing or the non-reducing ends of the peptidoglycan chains, with concomitant formation of a 1,6-anhydrobond in the MurNAc residue.. Murein-degrading enzyme that degrades murein glycan strands and insoluble, high-molecular weight murein sacculi, with the concomitant formation of a 1,6-anhydromuramoyl product. Lytic transglycosylases (LTs) play an integral role in the metabolism of the peptidoglycan (PG) sacculus. Their lytic action creates space within the PG sacculus to allow for its expansion as well as for the insertion of various structures such as secretion systems and flagella. This is Membrane-bound lytic murein transglycosylase F from Alcanivorax borkumensis (strain ATCC 700651 / DSM 11573 / NCIMB 13689 / SK2).